A 1157-amino-acid polypeptide reads, in one-letter code: Zinc finger protein 516 (1157 aa).

The segment covering 1-13 (MDRSREAEMELRR) has biased composition (basic and acidic residues). The segment at 1-26 (MDRSREAEMELRRGPSPPRAGRSHEV) is disordered. The interval 1 to 420 (MDRSREAEME…ATRGKVAEPA (420 aa)) is mediates promoter DNA-binding and activation of transcription. 7 C2H2-type zinc fingers span residues 34–56 (HSCCICGKSFPFQSSLSQHMRKH), 62–84 (YKCPYCDHRASQKGNLKIHIRSH), 162–185 (VPCSFCKSRFERKKDLELHVHQAH), 188–211 (FKCRLCSYVTLREESLLSHIERDH), 236–258 (FPCEVCGQAFSQTWFLKAHMKKH), 264–286 (HGCHICGRRFKEPWFLKNHMKAH), and 323–345 (EVCTKCGNLFTNLDSLNAHNAIH). The segment covering 449–458 (SQEKRKREQD) has biased composition (basic and acidic residues). Disordered regions lie at residues 449 to 503 (SQEK…QGKS) and 523 to 653 (SRVH…KGPE). Positions 494 to 503 (ASATTGQGKS) are enriched in polar residues. A C2H2-type 8 zinc finger spans residues 504–526 (SECFECGKIFRTYHQMVLHSRVH). Over residues 531 to 541 (RDRDPEGDRAA) the composition is skewed to basic and acidic residues. Residues 550–561 (EGDSASQPSSPG) are compositionally biased toward polar residues. A compositionally biased stretch (acidic residues) spans 575–585 (EVVDDSGEEAV). The span at 601–612 (GEVTPTALSNGD) shows a compositional bias: polar residues. Residue K630 forms a Glycyl lysine isopeptide (Lys-Gly) (interchain with G-Cter in SUMO2) linkage. The segment covering 644–653 (SSRETTKGPE) has biased composition (basic and acidic residues). Residue K669 forms a Glycyl lysine isopeptide (Lys-Gly) (interchain with G-Cter in SUMO2) linkage. The C2H2-type 9; atypical zinc finger occupies 753–776 (HPCPYCTHKTYYPEVLWMHKRIWH). Disordered stretches follow at residues 831–996 (TQVP…EPSV) and 1013–1040 (RGEAALQAPPGAPPTLNSAKQEPAAEGQ). Polar residues predominate over residues 914 to 928 (GSGSLSRSTTPTPSV). Residues K1032 and K1051 each participate in a glycyl lysine isopeptide (Lys-Gly) (interchain with G-Cter in SUMO2) cross-link. Residues 1092 to 1114 (FVCVECGKSFHQPSQLRAHLRAH) form a C2H2-type 10 zinc finger. Residues 1123–1157 (PRDSEVHTASTDAPKQGRDHTTPGTVPAGPLRKGI) form a disordered region.

It belongs to the krueppel C2H2-type zinc-finger protein family. As to quaternary structure, interacts with PRDM16; the interaction is direct and may play a role in the transcription of brown adipose tissue-specific genes. Interacts with PWWP2B. Interacts with HDAC1; this interaction is enhanced in the presence of PWWP2B. Expressed by adipocytes more specifically in brown adipose tissue compared to white adipose tissue (WAT).

Its subcellular location is the nucleus. In terms of biological role, transcriptional regulator that binds to the promoter and activates the transcription of genes promoting brown adipose tissue (BAT) differentiation. Among brown adipose tissue-specific genes, binds the proximal region of the promoter of the UCP1 gene to activate its transcription and thereby regulate thermogenesis. May also play a role in the cellular response to replication stress. In Mus musculus (Mouse), this protein is Zinc finger protein 516.